Consider the following 67-residue polypeptide: Large ribosomal subunit protein uL29 (67 aa).

Belongs to the universal ribosomal protein uL29 family.

In Moorella thermoacetica (strain ATCC 39073 / JCM 9320), this protein is Large ribosomal subunit protein uL29.